Here is a 146-residue protein sequence, read N- to C-terminus: Core protein D2 (146 aa).

Belongs to the orthopoxvirus OPG114 family. In terms of assembly, part of a complex composed of the kinase OPG054, OPG092, OPG100, OPG114, OPG115, OPG142 and OPG157.

It is found in the virion. Its function is as follows. Late protein which is part of a large complex required for early virion morphogenesis. This complex participates in the formation of virosomes and the incorporation of virosomal contents into nascent immature virions. The chain is Core protein D2 (OPG114) from Homo sapiens (Human).